The following is a 131-amino-acid chain: Profilin-9 (131 aa).

The cysteines at positions 13 and 115 are disulfide-linked. Positions alanine 81–threonine 97 match the Involved in PIP2 interaction motif. The residue at position 111 (threonine 111) is a Phosphothreonine.

Belongs to the profilin family. As to quaternary structure, occurs in many kinds of cells as a complex with monomeric actin in a 1:1 ratio. Post-translationally, phosphorylated by MAP kinases.

The protein localises to the cytoplasm. It localises to the cytoskeleton. In terms of biological role, binds to actin and affects the structure of the cytoskeleton. At high concentrations, profilin prevents the polymerization of actin, whereas it enhances it at low concentrations. This Zea mays (Maize) protein is Profilin-9.